Consider the following 511-residue polypeptide: Glucose-1-phosphate adenylyltransferase large subunit 1, chloroplastic/amyloplastic (511 aa).

The N-terminal 58 residues, 1-58, are a transit peptide targeting the chloroplast; sequence MAAMDLRVAAPASVAAAARCGTSLARPWPARAVGGGGGGGGRGRRLSVRTSVATTEAA.

It belongs to the bacterial/plant glucose-1-phosphate adenylyltransferase family. In terms of assembly, heterotetramer composed of two small and two large subunits. In terms of tissue distribution, expressed in leaves and stems.

It is found in the plastid. The protein localises to the chloroplast. It localises to the amyloplast. It carries out the reaction alpha-D-glucose 1-phosphate + ATP + H(+) = ADP-alpha-D-glucose + diphosphate. It participates in glycan biosynthesis; starch biosynthesis. With respect to regulation, activated by 3'phosphoglycerate, inhibited by orthophosphate. Allosteric regulation. Involved in synthesis of starch. Catalyzes the synthesis of ADP-glucose, a molecule that serves as an activated glycosyl donor for alpha-1,4-glucan synthesis. Essential for starch synthesis in leaf chloroplasts and endosperm amyloplasts. In Oryza sativa subsp. japonica (Rice), this protein is Glucose-1-phosphate adenylyltransferase large subunit 1, chloroplastic/amyloplastic.